The sequence spans 270 residues: Malonyl-[acyl-carrier protein] O-methyltransferase (270 aa).

Belongs to the methyltransferase superfamily.

The enzyme catalyses malonyl-[ACP] + S-adenosyl-L-methionine = malonyl-[ACP] methyl ester + S-adenosyl-L-homocysteine. It functions in the pathway cofactor biosynthesis; biotin biosynthesis. Converts the free carboxyl group of a malonyl-thioester to its methyl ester by transfer of a methyl group from S-adenosyl-L-methionine (SAM). It allows to synthesize pimeloyl-ACP via the fatty acid synthetic pathway. This chain is Malonyl-[acyl-carrier protein] O-methyltransferase, found in Marinomonas sp. (strain MWYL1).